The chain runs to 94 residues: Translation initiation factor IF-1 (94 aa).

The S1-like domain maps to 1–72 (MAKEELIQFE…EKGRLIFRHK (72 aa)). The interval 71–94 (HKDERPGGTGAPRSGPPRGQFRRR) is disordered.

The protein belongs to the IF-1 family. Component of the 30S ribosomal translation pre-initiation complex which assembles on the 30S ribosome in the order IF-2 and IF-3, IF-1 and N-formylmethionyl-tRNA(fMet); mRNA recruitment can occur at any time during PIC assembly.

It is found in the cytoplasm. In terms of biological role, one of the essential components for the initiation of protein synthesis. Stabilizes the binding of IF-2 and IF-3 on the 30S subunit to which N-formylmethionyl-tRNA(fMet) subsequently binds. Helps modulate mRNA selection, yielding the 30S pre-initiation complex (PIC). Upon addition of the 50S ribosomal subunit IF-1, IF-2 and IF-3 are released leaving the mature 70S translation initiation complex. In Rhodopseudomonas palustris (strain HaA2), this protein is Translation initiation factor IF-1.